The primary structure comprises 156 residues: ATP synthase subunit b (156 aa).

A helical transmembrane segment spans residues 3–23; sequence ITLTIFAQALAFAGLIWIVAT.

It belongs to the ATPase B chain family. As to quaternary structure, F-type ATPases have 2 components, F(1) - the catalytic core - and F(0) - the membrane proton channel. F(1) has five subunits: alpha(3), beta(3), gamma(1), delta(1), epsilon(1). F(0) has three main subunits: a(1), b(2) and c(10-14). The alpha and beta chains form an alternating ring which encloses part of the gamma chain. F(1) is attached to F(0) by a central stalk formed by the gamma and epsilon chains, while a peripheral stalk is formed by the delta and b chains.

It localises to the cell inner membrane. In terms of biological role, f(1)F(0) ATP synthase produces ATP from ADP in the presence of a proton or sodium gradient. F-type ATPases consist of two structural domains, F(1) containing the extramembraneous catalytic core and F(0) containing the membrane proton channel, linked together by a central stalk and a peripheral stalk. During catalysis, ATP synthesis in the catalytic domain of F(1) is coupled via a rotary mechanism of the central stalk subunits to proton translocation. Component of the F(0) channel, it forms part of the peripheral stalk, linking F(1) to F(0). The chain is ATP synthase subunit b from Xanthomonas axonopodis pv. citri (strain 306).